Consider the following 110-residue polypeptide: U1-lycotoxin-Ls1aa (110 aa).

An N-terminal signal peptide occupies residues 1-20 (MKFVLLFGVLLVTLFSYSSA). Positions 21–44 (EMLDDFDQADEDELLSLIEKEEAR) are excised as a propeptide. 4 disulfide bridges follow: Cys47–Cys62, Cys54–Cys71, Cys61–Cys89, and Cys73–Cys87.

Belongs to the neurotoxin 19 (CSTX) family. 03 subfamily. Expressed by the venom gland.

Its subcellular location is the secreted. The polypeptide is U1-lycotoxin-Ls1aa (Lycosa singoriensis (Wolf spider)).